We begin with the raw amino-acid sequence, 341 residues long: UDP-3-O-(3-hydroxymyristoyl)glucosamine N-acyltransferase (341 aa).

Residue histidine 239 is the Proton acceptor of the active site.

It belongs to the transferase hexapeptide repeat family. LpxD subfamily. As to quaternary structure, homotrimer.

It carries out the reaction a UDP-3-O-[(3R)-3-hydroxyacyl]-alpha-D-glucosamine + a (3R)-hydroxyacyl-[ACP] = a UDP-2-N,3-O-bis[(3R)-3-hydroxyacyl]-alpha-D-glucosamine + holo-[ACP] + H(+). The enzyme catalyses UDP-3-O-[(3R)-3-hydroxytetradecanoyl]-alpha-D-glucosamine + (3R)-hydroxytetradecanoyl-[ACP] = UDP-2-N,3-O-bis[(3R)-3-hydroxytetradecanoyl]-alpha-D-glucosamine + holo-[ACP] + H(+). It functions in the pathway glycolipid biosynthesis; lipid IV(A) biosynthesis; lipid IV(A) from (3R)-3-hydroxytetradecanoyl-[acyl-carrier-protein] and UDP-N-acetyl-alpha-D-glucosamine: step 3/6. Its function is as follows. Catalyzes the N-acylation of UDP-3-O-(hydroxytetradecanoyl)glucosamine using 3-hydroxytetradecanoyl-ACP as the acyl donor. Is involved in the biosynthesis of lipid A, a phosphorylated glycolipid that anchors the lipopolysaccharide to the outer membrane of the cell. The sequence is that of UDP-3-O-(3-hydroxymyristoyl)glucosamine N-acyltransferase from Escherichia coli O157:H7.